A 50-amino-acid chain; its full sequence is Protein HokE (50 aa).

Residues 5-25 traverse the membrane as a helical segment; sequence YALVAVIVLCLTVLGFTLLVG.

This sequence belongs to the Hok/Gef family.

It localises to the cell inner membrane. Functionally, toxic component of a type I toxin-antitoxin (TA) system. When overexpressed kills cells within minutes; causes collapse of the transmembrane potential and arrest of respiration. Its toxic effect is probably neutralized by an antisense antitoxin Sok RNA. The protein is Protein HokE (hokE) of Escherichia coli O157:H7.